The following is a 775-amino-acid chain: MTSVHDFATATRPATPSAAAQEPAPALPPGLDRNTLDALTHGRLGDPFAVLGPHRLETAEGERPHRVVRAFHPGARRVQAIDPRGQVMAELAPVGRTGLFHGRLPDDAPDADGHPGAYRLRVVWPAGAGHEAVQEAEDPYAFGLLLGDLDLHLIAEGRHWELARCLGAQAMRQDDVAGVRFAVWAPNARRVSVVGDFNQWDGRRHPMRLRHGTGVWELFVPAGLGAGPGSRYKFELVGADGHLLVKADPVARRTEAPPATASVVADPLPFRWSDAAWMETRAARQRPDAPIAIYEVHAGSWLRDVEDGGRSLDWDALGERLIPYVAGLGFTHVELLPVAEHPFGGSWGYQPLGLFAPSARFGPPEAFARFVERCHQAALGVIVDWVPAHFPSDPHGLARFDGTALYEHADPREGFHQDWNTLIYNFGRHEVRGFLIASALEWLEHFHIDGLRVDAVASMLYRDYSRPADAWVPNRYGGRENLEAVAFLQQMNAVVHARCPGAITIAEESTAWPGVTAAVEFNGLGFDYKWNMGWMHDTLHYMQRDPIYRQHHHDGLTFGLVYAFSERFILPLSHDEVVHGKGSLLGKMPGDDWQRLANLRAYLAFMWTHPGKKLLFMGGEFGQLGEWNHDAAPEWHLLDDPRHRGVQRLVHDLNALYRSEPALHARDCAPEGFSWVIGDDRANSVFAYLRLDTAGTPMLIVANMTPVPRDGYRIGVPDVDGAVRWREMLNTDSAVYGGTNLGNGGVVDVEDVESHGWRRSVVVRLPPLAVVVLKV.

The tract at residues 1–39 is disordered; the sequence is MTSVHDFATATRPATPSAAAQEPAPALPPGLDRNTLDAL. Positions 8–24 are enriched in low complexity; it reads ATATRPATPSAAAQEPA. Asp-454 functions as the Nucleophile in the catalytic mechanism. Glu-507 serves as the catalytic Proton donor.

Belongs to the glycosyl hydrolase 13 family. GlgB subfamily. As to quaternary structure, monomer.

The catalysed reaction is Transfers a segment of a (1-&gt;4)-alpha-D-glucan chain to a primary hydroxy group in a similar glucan chain.. It functions in the pathway glycan biosynthesis; glycogen biosynthesis. Functionally, catalyzes the formation of the alpha-1,6-glucosidic linkages in glycogen by scission of a 1,4-alpha-linked oligosaccharide from growing alpha-1,4-glucan chains and the subsequent attachment of the oligosaccharide to the alpha-1,6 position. The sequence is that of 1,4-alpha-glucan branching enzyme GlgB from Ralstonia nicotianae (strain ATCC BAA-1114 / GMI1000) (Ralstonia solanacearum).